The chain runs to 121 residues: Large ribosomal subunit protein bL20 (121 aa).

This sequence belongs to the bacterial ribosomal protein bL20 family.

Binds directly to 23S ribosomal RNA and is necessary for the in vitro assembly process of the 50S ribosomal subunit. It is not involved in the protein synthesizing functions of that subunit. The protein is Large ribosomal subunit protein bL20 of Persephonella marina (strain DSM 14350 / EX-H1).